Here is a 374-residue protein sequence, read N- to C-terminus: uncharacterized protein (374 aa).

A coiled-coil region spans residues 298 to 332 (TKEKLLKLHSEQKSLSEKINKLSGEKDIEQSMINN).

This is an uncharacterized protein from Acanthamoeba polyphaga (Amoeba).